A 156-amino-acid polypeptide reads, in one-letter code: ATP synthase subunit b', chloroplastic (156 aa).

The helical transmembrane segment at 24-44 threads the bilayer; it reads ATLPLVAIQFILLMVTLNIIL.

It belongs to the ATPase B chain family. In terms of assembly, F-type ATPases have 2 components, F(1) - the catalytic core - and F(0) - the membrane proton channel. F(1) has five subunits: alpha(3), beta(3), gamma(1), delta(1), epsilon(1). F(0) has four main subunits: a(1), b(1), b'(1) and c(10-14). The alpha and beta chains form an alternating ring which encloses part of the gamma chain. F(1) is attached to F(0) by a central stalk formed by the gamma and epsilon chains, while a peripheral stalk is formed by the delta, b and b' chains.

The protein resides in the plastid. It is found in the chloroplast thylakoid membrane. Its function is as follows. F(1)F(0) ATP synthase produces ATP from ADP in the presence of a proton or sodium gradient. F-type ATPases consist of two structural domains, F(1) containing the extramembraneous catalytic core and F(0) containing the membrane proton channel, linked together by a central stalk and a peripheral stalk. During catalysis, ATP synthesis in the catalytic domain of F(1) is coupled via a rotary mechanism of the central stalk subunits to proton translocation. In terms of biological role, component of the F(0) channel, it forms part of the peripheral stalk, linking F(1) to F(0). The b'-subunit is a diverged and duplicated form of b found in plants and photosynthetic bacteria. The protein is ATP synthase subunit b', chloroplastic of Thalassiosira pseudonana (Marine diatom).